Reading from the N-terminus, the 502-residue chain is Cytochrome P450 3A5 (502 aa).

Residue cysteine 441 coordinates heme.

Belongs to the cytochrome P450 family. The cofactor is heme.

The protein localises to the endoplasmic reticulum membrane. The protein resides in the microsome membrane. The enzyme catalyses an organic molecule + reduced [NADPH--hemoprotein reductase] + O2 = an alcohol + oxidized [NADPH--hemoprotein reductase] + H2O + H(+). The catalysed reaction is 17beta-estradiol + reduced [NADPH--hemoprotein reductase] + O2 = 2-hydroxy-17beta-estradiol + oxidized [NADPH--hemoprotein reductase] + H2O + H(+). It carries out the reaction 17beta-estradiol + reduced [NADPH--hemoprotein reductase] + O2 = 4-hydroxy-17beta-estradiol + oxidized [NADPH--hemoprotein reductase] + H2O + H(+). It catalyses the reaction estrone + reduced [NADPH--hemoprotein reductase] + O2 = 2-hydroxyestrone + oxidized [NADPH--hemoprotein reductase] + H2O + H(+). The enzyme catalyses estrone + reduced [NADPH--hemoprotein reductase] + O2 = 4-hydroxyestrone + oxidized [NADPH--hemoprotein reductase] + H2O + H(+). The catalysed reaction is testosterone + reduced [NADPH--hemoprotein reductase] + O2 = 6beta,17beta-dihydroxyandrost-4-en-3-one + oxidized [NADPH--hemoprotein reductase] + H2O + H(+). It carries out the reaction androst-4-ene-3,17-dione + reduced [NADPH--hemoprotein reductase] + O2 = 6beta-hydroxyandrost-4-ene-3,17-dione + oxidized [NADPH--hemoprotein reductase] + H2O + H(+). It catalyses the reaction progesterone + reduced [NADPH--hemoprotein reductase] + O2 = 6beta-hydroxyprogesterone + oxidized [NADPH--hemoprotein reductase] + H2O + H(+). The enzyme catalyses all-trans-retinol + reduced [NADPH--hemoprotein reductase] + O2 = all-trans-retinal + oxidized [NADPH--hemoprotein reductase] + 2 H2O + H(+). The catalysed reaction is all-trans-retinoate + reduced [NADPH--hemoprotein reductase] + O2 = all-trans-4-hydroxyretinoate + oxidized [NADPH--hemoprotein reductase] + H2O + H(+). It functions in the pathway steroid hormone biosynthesis. The protein operates within cofactor metabolism; retinol metabolism. Its function is as follows. A cytochrome P450 monooxygenase involved in the metabolism of steroid hormones and vitamins. Mechanistically, uses molecular oxygen inserting one oxygen atom into a substrate, and reducing the second into a water molecule, with two electrons provided by NADPH via cytochrome P450 reductase (NADPH--hemoprotein reductase). Catalyzes the hydroxylation of carbon-hydrogen bonds. Exhibits high catalytic activity for the formation of catechol estrogens from 17beta-estradiol (E2) and estrone (E1), namely 2-hydroxy E1 and E2. Catalyzes 6beta-hydroxylation of the steroid hormones testosterone, progesterone, and androstenedione. Catalyzes the oxidative conversion of all-trans-retinol to all-trans-retinal, a rate-limiting step for the biosynthesis of all-trans-retinoic acid (atRA). Further metabolizes all trans-retinoic acid (atRA) to 4-hydroxyretinoate and may play a role in hepatic atRA clearance. Also involved in the oxidative metabolism of xenobiotics, including calcium channel blocking drug nifedipine and immunosuppressive drug cyclosporine. The protein is Cytochrome P450 3A5 of Homo sapiens (Human).